A 450-amino-acid chain; its full sequence is Phosphoglucosamine mutase (450 aa).

Catalysis depends on Ser-101, which acts as the Phosphoserine intermediate. Mg(2+) contacts are provided by Ser-101, Asp-240, Asp-242, and Asp-244. Ser-101 is modified (phosphoserine).

The protein belongs to the phosphohexose mutase family. Requires Mg(2+) as cofactor. In terms of processing, activated by phosphorylation.

It carries out the reaction alpha-D-glucosamine 1-phosphate = D-glucosamine 6-phosphate. Functionally, catalyzes the conversion of glucosamine-6-phosphate to glucosamine-1-phosphate. The protein is Phosphoglucosamine mutase of Streptococcus pneumoniae serotype 19F (strain G54).